Here is a 215-residue protein sequence, read N- to C-terminus: Probable transaldolase (215 aa).

Residue lysine 83 is the Schiff-base intermediate with substrate of the active site.

The protein belongs to the transaldolase family. Type 3B subfamily.

Its subcellular location is the cytoplasm. The enzyme catalyses D-sedoheptulose 7-phosphate + D-glyceraldehyde 3-phosphate = D-erythrose 4-phosphate + beta-D-fructose 6-phosphate. The protein operates within carbohydrate degradation; pentose phosphate pathway; D-glyceraldehyde 3-phosphate and beta-D-fructose 6-phosphate from D-ribose 5-phosphate and D-xylulose 5-phosphate (non-oxidative stage): step 2/3. Transaldolase is important for the balance of metabolites in the pentose-phosphate pathway. The polypeptide is Probable transaldolase (Desulforudis audaxviator (strain MP104C)).